The sequence spans 96 residues: UPF0235 protein CAB243 (96 aa).

The protein belongs to the UPF0235 family.

This Chlamydia abortus (strain DSM 27085 / S26/3) (Chlamydophila abortus) protein is UPF0235 protein CAB243.